A 192-amino-acid polypeptide reads, in one-letter code: Lipid A acyltransferase PagP (192 aa).

Residues 1–24 (MWLRFCAPALMAWYWVFFPSTSQA) form the signal peptide. Active-site residues include His63, Asp106, and Ser107.

It belongs to the lipid A palmitoyltransferase family. Homodimer.

It localises to the cell outer membrane. The enzyme catalyses a lipid A + a 1,2-diacyl-sn-glycero-3-phosphocholine = a hepta-acyl lipid A + a 2-acyl-sn-glycero-3-phosphocholine. The catalysed reaction is a lipid IVA + a 1,2-diacyl-sn-glycero-3-phosphocholine = a lipid IVB + a 2-acyl-sn-glycero-3-phosphocholine. It carries out the reaction a lipid IIA + a 1,2-diacyl-sn-glycero-3-phosphocholine = a lipid IIB + a 2-acyl-sn-glycero-3-phosphocholine. In terms of biological role, transfers a fatty acid residue from the sn-1 position of a phospholipid to the N-linked hydroxyfatty acid chain on the proximal unit of lipid A or its precursors. This is Lipid A acyltransferase PagP from Musicola paradisiaca (strain Ech703) (Dickeya paradisiaca).